A 310-amino-acid chain; its full sequence is Taste receptor type 2 member 125 (310 aa).

At 1-2 the chain is on the extracellular side; sequence MG. Residues 3–23 traverse the membrane as a helical segment; it reads IVIGIICAFIIIVQFIIGNVA. Residues 24-46 are Cytoplasmic-facing; sequence NGFIALVNIIDWVKRRKISLVDQ. A helical transmembrane segment spans residues 47 to 67; sequence IITALAISRIDMLCSTFLIVL. Topologically, residues 68–87 are extracellular; the sequence is ITSLYPDLNTAVNMVKISNN. Residues 88–108 form a helical membrane-spanning segment; it reads IWIVANHFSIWLATSLSIFYF. The Cytoplasmic segment spans residues 109–128; the sequence is LKIANFSNYVFLCLRWRLSK. Residues 129–149 traverse the membrane as a helical segment; that stretch reads VVSVTLLLSLVLLLMNILIMN. At 150-185 the chain is on the extracellular side; sequence MHIDTWSDGFKRNVSFGFRSKNCTRFFKLALLINTT. N-linked (GlcNAc...) asparagine glycans are attached at residues Asn-162, Asn-171, and Asn-183. Residues 186–206 traverse the membrane as a helical segment; the sequence is FTCVPFTVSMVAFLLLIFSLW. The Cytoplasmic segment spans residues 207–232; the sequence is RHLKNMQYHAKGSRDPSTAVHIKALQ. A helical membrane pass occupies residues 233-253; it reads MVVVFVLFYTFFFLSLAIQLW. Topologically, residues 254 to 261 are extracellular; it reads TSESLEKN. A helical membrane pass occupies residues 262 to 282; that stretch reads NLFYVTLIITFPSVHSCMLIL. The Cytoplasmic portion of the chain corresponds to 283–310; the sequence is RNSKLRQASLLVLWWLLCRSKDIQTLVP.

Belongs to the G-protein coupled receptor T2R family.

The protein localises to the membrane. Its function is as follows. Putative taste receptor which may play a role in the perception of bitterness. In Rattus norvegicus (Rat), this protein is Taste receptor type 2 member 125.